A 195-amino-acid polypeptide reads, in one-letter code: Probable GTP-binding protein EngB (195 aa).

In terms of domain architecture, EngB-type G spans 24-195 (ELPEIALAGR…EAWDAILEKL (172 aa)). GTP contacts are provided by residues 32-39 (GRSNVGKS), 59-63 (GKTQL), 77-80 (DVPG), 144-147 (TKAD), and 176-178 (FSS). The Mg(2+) site is built by Ser-39 and Thr-61.

It belongs to the TRAFAC class TrmE-Era-EngA-EngB-Septin-like GTPase superfamily. EngB GTPase family. Mg(2+) is required as a cofactor.

Necessary for normal cell division and for the maintenance of normal septation. The chain is Probable GTP-binding protein EngB from Streptococcus pneumoniae (strain P1031).